Here is a 240-residue protein sequence, read N- to C-terminus: Biosynthetic peptidoglycan transglycosylase (240 aa).

A helical transmembrane segment spans residues 12-31 (ALLWFAGGSVLLVLVFRFVP).

This sequence belongs to the glycosyltransferase 51 family.

It localises to the cell inner membrane. The catalysed reaction is [GlcNAc-(1-&gt;4)-Mur2Ac(oyl-L-Ala-gamma-D-Glu-L-Lys-D-Ala-D-Ala)](n)-di-trans,octa-cis-undecaprenyl diphosphate + beta-D-GlcNAc-(1-&gt;4)-Mur2Ac(oyl-L-Ala-gamma-D-Glu-L-Lys-D-Ala-D-Ala)-di-trans,octa-cis-undecaprenyl diphosphate = [GlcNAc-(1-&gt;4)-Mur2Ac(oyl-L-Ala-gamma-D-Glu-L-Lys-D-Ala-D-Ala)](n+1)-di-trans,octa-cis-undecaprenyl diphosphate + di-trans,octa-cis-undecaprenyl diphosphate + H(+). The protein operates within cell wall biogenesis; peptidoglycan biosynthesis. Functionally, peptidoglycan polymerase that catalyzes glycan chain elongation from lipid-linked precursors. This is Biosynthetic peptidoglycan transglycosylase from Pseudomonas fluorescens (strain Pf0-1).